The chain runs to 442 residues: Protein bangles and beads (442 aa).

The interval alanine 47–asparagine 442 is disordered. Basic and acidic residues-rich tracts occupy residues proline 55–glutamate 67, proline 114–proline 125, and glutamate 133–alanine 146. The span at alanine 159–glutamate 172 shows a compositional bias: low complexity. Basic and acidic residues-rich tracts occupy residues valine 177–glutamate 194 and alanine 204–lysine 240. Low complexity-rich tracts occupy residues alanine 241–lysine 255 and serine 272–alanine 288. Basic and acidic residues predominate over residues glutamate 329–proline 339. Over residues threonine 357–proline 376 the composition is skewed to low complexity. Positions glutamate 408–asparagine 442 are enriched in basic and acidic residues. 4 positions are modified to phosphoserine: serine 430, serine 433, serine 436, and serine 437.

As to expression, expressed in the embryonic CNS, in sets of cells that are segmentally reiterated along the periphery of the nervous system.

May play an important role during development. This is Protein bangles and beads (bnb) from Drosophila melanogaster (Fruit fly).